The primary structure comprises 182 residues: Putative manganese efflux pump MntP (182 aa).

6 helical membrane-spanning segments follow: residues leucine 6–glycine 26, isoleucine 37–valine 57, histidine 71–leucine 91, isoleucine 101–leucine 121, isoleucine 131–isoleucine 151, and tyrosine 162–isoleucine 182.

It belongs to the MntP (TC 9.B.29) family.

Its subcellular location is the cell membrane. In terms of biological role, probably functions as a manganese efflux pump. The protein is Putative manganese efflux pump MntP of Bacillus anthracis (strain A0248).